A 418-amino-acid chain; its full sequence is Serine hydroxymethyltransferase (418 aa).

Residues Leu-121 and 125–127 (GHL) contribute to the (6S)-5,6,7,8-tetrahydrofolate site. Position 230 is an N6-(pyridoxal phosphate)lysine (Lys-230). (6S)-5,6,7,8-tetrahydrofolate contacts are provided by residues Glu-246 and 355 to 357 (SPF).

This sequence belongs to the SHMT family. As to quaternary structure, homodimer. Requires pyridoxal 5'-phosphate as cofactor.

Its subcellular location is the cytoplasm. The enzyme catalyses (6R)-5,10-methylene-5,6,7,8-tetrahydrofolate + glycine + H2O = (6S)-5,6,7,8-tetrahydrofolate + L-serine. Its pathway is one-carbon metabolism; tetrahydrofolate interconversion. It functions in the pathway amino-acid biosynthesis; glycine biosynthesis; glycine from L-serine: step 1/1. Functionally, catalyzes the reversible interconversion of serine and glycine with tetrahydrofolate (THF) serving as the one-carbon carrier. This reaction serves as the major source of one-carbon groups required for the biosynthesis of purines, thymidylate, methionine, and other important biomolecules. Also exhibits THF-independent aldolase activity toward beta-hydroxyamino acids, producing glycine and aldehydes, via a retro-aldol mechanism. This Streptococcus pneumoniae (strain Taiwan19F-14) protein is Serine hydroxymethyltransferase.